The chain runs to 473 residues: Phosphatidylserine synthase 1 (473 aa).

Topologically, residues 1–35 are cytoplasmic; the sequence is MAACVGSRTLSKDDVNYRLHFRMINEQQVEDITLE. Residues 36–56 traverse the membrane as a helical segment; the sequence is FFYRPHTITLLSFTILSLMAF. Residues 57–72 are Lumenal-facing; it reads AFTRDDSVPEENIWRG. Residues 73-93 traverse the membrane as a helical segment; sequence ILSVIFFFLIISVLAFPNGPF. The Cytoplasmic segment spans residues 94–102; that stretch reads TRPHPAIWR. Residues 103-123 form a helical membrane-spanning segment; it reads MVFGLSVLYFLFLVFVLFLNF. At 124–186 the chain is on the lumenal side; it reads EQVKAVMYWL…AMKALLIRSY (63 aa). The chain crosses the membrane as a helical span at residues 187–207; that stretch reads GLCWTISITWELTELFFMHLL. The Cytoplasmic segment spans residues 208 to 216; sequence PNFAECWWD. The chain crosses the membrane as a helical span at residues 217 to 237; that stretch reads QVILDILLCNGGGIWLGMVVC. Residues 238-286 are Lumenal-facing; sequence RFLEMRTYHWASFKDIHTTTGKIKRAVLQFTPASWTYVRWFDPKSSFQR. Residues 287 to 307 form a helical membrane-spanning segment; sequence VAGIYLFMIIWQLTELNTFFL. Residues 308–319 are Cytoplasmic-facing; it reads KHIFVFQASHPL. Residues 320–342 form a helical membrane-spanning segment; it reads SWGRILFIGIITAPTVRQYYAYL. Residues 343–355 are Lumenal-facing; the sequence is TDTQCKRVGTQCW. A helical transmembrane segment spans residues 356-376; it reads VFGVIAFLEAIVCIKFGQDLF. Residues 377–380 are Cytoplasmic-facing; it reads SKTQ. The chain crosses the membrane as a helical span at residues 381–401; that stretch reads ILYVVFWLLCVAFTTFLCLYG. Residues 402-473 lie on the Lumenal side of the membrane; that stretch reads MVWYAEYYGH…SKVTNGIGKK (72 aa). The disordered stretch occupies residues 420-473; that stretch reads EDSPYSPDASWLHSKFSKGADNSPPKHPVNSESHSSRRRNRHSRSKVTNGIGKK. Positions 455–464 are enriched in basic residues; that stretch reads SRRRNRHSRS.

Belongs to the phosphatidyl serine synthase family.

It localises to the endoplasmic reticulum membrane. It carries out the reaction a 1,2-diacyl-sn-glycero-3-phosphoethanolamine + L-serine = a 1,2-diacyl-sn-glycero-3-phospho-L-serine + ethanolamine. The enzyme catalyses a 1,2-diacyl-sn-glycero-3-phosphocholine + L-serine = a 1,2-diacyl-sn-glycero-3-phospho-L-serine + choline. It functions in the pathway phospholipid metabolism; phosphatidylserine biosynthesis. Catalyzes a base-exchange reaction in which the polar head group of phosphatidylethanolamine (PE) or phosphatidylcholine (PC) is replaced by L-serine. Catalyzes mainly the conversion of phosphatidylcholine but also converts, in vitro and to a lesser extent, phosphatidylethanolamine. In Gallus gallus (Chicken), this protein is Phosphatidylserine synthase 1 (PTDSS1).